A 147-amino-acid chain; its full sequence is Large ribosomal subunit protein bL9 (147 aa).

It belongs to the bacterial ribosomal protein bL9 family.

In terms of biological role, binds to the 23S rRNA. The chain is Large ribosomal subunit protein bL9 from Gemmatimonas aurantiaca (strain DSM 14586 / JCM 11422 / NBRC 100505 / T-27).